The chain runs to 691 residues: DNA ligase (691 aa).

NAD(+) is bound by residues 41–45, 90–91, and Glu130; these read DAEYD and SL. Lys132 serves as the catalytic N6-AMP-lysine intermediate. Residues Arg153, Glu190, Lys307, and Lys331 each coordinate NAD(+). Positions 425, 428, 443, and 449 each coordinate Zn(2+). One can recognise a BRCT domain in the interval 610-691; that stretch reads APQGVLAGKT…LHQLLEGNTP (82 aa).

Belongs to the NAD-dependent DNA ligase family. LigA subfamily. It depends on Mg(2+) as a cofactor. Mn(2+) is required as a cofactor.

It catalyses the reaction NAD(+) + (deoxyribonucleotide)n-3'-hydroxyl + 5'-phospho-(deoxyribonucleotide)m = (deoxyribonucleotide)n+m + AMP + beta-nicotinamide D-nucleotide.. DNA ligase that catalyzes the formation of phosphodiester linkages between 5'-phosphoryl and 3'-hydroxyl groups in double-stranded DNA using NAD as a coenzyme and as the energy source for the reaction. It is essential for DNA replication and repair of damaged DNA. The protein is DNA ligase of Burkholderia cenocepacia (strain ATCC BAA-245 / DSM 16553 / LMG 16656 / NCTC 13227 / J2315 / CF5610) (Burkholderia cepacia (strain J2315)).